Consider the following 171-residue polypeptide: 3-hydroxydecanoyl-[acyl-carrier-protein] dehydratase (171 aa).

Residue His-70 is part of the active site.

It belongs to the thioester dehydratase family. FabA subfamily. In terms of assembly, homodimer.

It is found in the cytoplasm. The catalysed reaction is a (3R)-hydroxyacyl-[ACP] = a (2E)-enoyl-[ACP] + H2O. It carries out the reaction (3R)-hydroxydecanoyl-[ACP] = (2E)-decenoyl-[ACP] + H2O. It catalyses the reaction (2E)-decenoyl-[ACP] = (3Z)-decenoyl-[ACP]. It participates in lipid metabolism; fatty acid biosynthesis. In terms of biological role, necessary for the introduction of cis unsaturation into fatty acids. Catalyzes the dehydration of (3R)-3-hydroxydecanoyl-ACP to E-(2)-decenoyl-ACP and then its isomerization to Z-(3)-decenoyl-ACP. Can catalyze the dehydratase reaction for beta-hydroxyacyl-ACPs with saturated chain lengths up to 16:0, being most active on intermediate chain length. This is 3-hydroxydecanoyl-[acyl-carrier-protein] dehydratase from Pseudomonas fluorescens (strain SBW25).